The primary structure comprises 525 residues: Probable bifunctional tRNA threonylcarbamoyladenosine biosynthesis protein (525 aa).

Positions 1–322 (MPEKRVLGIE…FRSDQVEVTW (322 aa)) are kae1. 3 residues coordinate Fe cation: H106, H110, and Y127. L-threonylcarbamoyladenylate-binding positions include 127-131 (YASGA), D159, G172, E176, and N255. Residue D283 coordinates Fe cation. The Protein kinase domain maps to 331-525 (APGQSETAER…HEIELRGRYL (195 aa)). ATP-binding positions include 338–346 (AERGAEASV) and K355. D442 serves as the catalytic Proton acceptor; for kinase activity.

This sequence in the N-terminal section; belongs to the KAE1 / TsaD family. In the C-terminal section; belongs to the protein kinase superfamily. Tyr protein kinase family. BUD32 subfamily. As to quaternary structure, component of the KEOPS complex that consists of Kae1, Bud32, Cgi121 and Pcc1; the whole complex dimerizes. It depends on Fe(2+) as a cofactor.

Its subcellular location is the cytoplasm. It carries out the reaction L-seryl-[protein] + ATP = O-phospho-L-seryl-[protein] + ADP + H(+). The catalysed reaction is L-threonyl-[protein] + ATP = O-phospho-L-threonyl-[protein] + ADP + H(+). The enzyme catalyses L-threonylcarbamoyladenylate + adenosine(37) in tRNA = N(6)-L-threonylcarbamoyladenosine(37) in tRNA + AMP + H(+). Required for the formation of a threonylcarbamoyl group on adenosine at position 37 (t(6)A37) in tRNAs that read codons beginning with adenine. Is a component of the KEOPS complex that is probably involved in the transfer of the threonylcarbamoyl moiety of threonylcarbamoyl-AMP (TC-AMP) to the N6 group of A37. The Kae1 domain likely plays a direct catalytic role in this reaction. The Bud32 domain probably displays kinase activity that regulates Kae1 function. The sequence is that of Probable bifunctional tRNA threonylcarbamoyladenosine biosynthesis protein from Methanocorpusculum labreanum (strain ATCC 43576 / DSM 4855 / Z).